The primary structure comprises 234 residues: Demethylmenaquinone methyltransferase (234 aa).

S-adenosyl-L-methionine contacts are provided by residues Thr-58, Asp-79, and 106–107; that span reads NA.

The protein belongs to the class I-like SAM-binding methyltransferase superfamily. MenG/UbiE family.

The catalysed reaction is a 2-demethylmenaquinol + S-adenosyl-L-methionine = a menaquinol + S-adenosyl-L-homocysteine + H(+). The protein operates within quinol/quinone metabolism; menaquinone biosynthesis; menaquinol from 1,4-dihydroxy-2-naphthoate: step 2/2. In terms of biological role, methyltransferase required for the conversion of demethylmenaquinol (DMKH2) to menaquinol (MKH2). The chain is Demethylmenaquinone methyltransferase from Geobacillus sp. (strain WCH70).